The primary structure comprises 170 residues: APRG1 tumor suppressor candidate (170 aa).

Residues 150–170 (IALALAGPGAILILELSWFLG) traverse the membrane as a helical segment.

In terms of tissue distribution, expressed at high levels in the pancreas and placenta. As to expression, expressed at high levels in the kidney.

The protein localises to the membrane. This is APRG1 tumor suppressor candidate from Homo sapiens (Human).